The chain runs to 2647 residues: Filamin-A (2647 aa).

The interval 1–37 is disordered; sequence MSSSHSRCGQSAAVASPGGSIDSRDAEMPATEKDLAE. Serine 2 carries the N-acetylserine modification. An actin-binding region spans residues 2–274; sequence SSSHSRCGQS…PKAKLKPGAP (273 aa). Serine 11, serine 16, and serine 20 each carry phosphoserine. The segment covering 22 to 37 has biased composition (basic and acidic residues); sequence DSRDAEMPATEKDLAE. Residues lysine 42, lysine 43, and lysine 135 each participate in a glycyl lysine isopeptide (Lys-Gly) (interchain with G-Cter in ubiquitin) cross-link. Calponin-homology (CH) domains follow at residues 43–149 and 166–269; these read KIQQ…LHYS and QTPK…KAKL. A disordered region spans residues 271–294; the sequence is PGAPLRPKLNPKKARAYGPGIEPT. Filamin repeat units follow at residues 276–374, 376–474, 475–570, 571–663, 667–763, 764–866, 867–965, 966–1061, 1062–1154, 1155–1249, 1250–1349, 1350–1442, 1443–1539, 1540–1636, and 1641–1740; these read RPKL…EVYV, KSQG…TVTV, GQAC…EVKV, GTEC…MADI, PQDF…RVNV, GAGS…RVKV, EPSH…SVGV, SPSL…PLEA, VAPT…KAHV, APCF…KLQV, EPAV…QVPV, TEGC…KVPV, HDVT…KVKV, LPTH…RVRA, and DASK…QVTA. Residue lysine 299 forms a Glycyl lysine isopeptide (Lys-Gly) (interchain with G-Cter in SUMO1); alternate linkage. A Glycyl lysine isopeptide (Lys-Gly) (interchain with G-Cter in SUMO2); alternate cross-link involves residue lysine 299. 2 positions are modified to N6-acetyllysine: lysine 376 and lysine 508. 5 positions are modified to N6-acetyllysine: lysine 700, lysine 781, lysine 837, lysine 865, and lysine 906. Phosphoserine is present on residues serine 968 and serine 1055. Lysine 1071 carries the N6-acetyllysine; alternate modification. Lysine 1071 bears the N6-succinyllysine; alternate mark. Serine 1084 is subject to Phosphoserine. Threonine 1089 carries the phosphothreonine modification. A phosphoserine mark is found at serine 1301 and serine 1338. An N6-acetyllysine modification is found at lysine 1372. 2 positions are modified to phosphoserine: serine 1459 and serine 1533. Residues 1490–1607 form an interaction with furin region; it reads PKGLVEPVDV…DNHDGTYTVA (118 aa). The residue at position 1538 (lysine 1538) is an N6-acetyllysine. A phosphoserine mark is found at serine 1630 and serine 1734. The tract at residues 1741 to 1778 is hinge 1; the sequence is LAGDQPTVQTPLRSQQLAPQYNYPQGSQQTWIPERPMV. Position 1750 is a phosphothreonine (threonine 1750). Filamin repeat units lie at residues 1765–1860, 1861–1952, 1953–2039, 2042–2134, 2135–2230, 2233–2325, 2327–2420, and 2424–2516; these read QGSQ…QFYV, DYVN…TARV, TGDD…PVVI, SEIG…SVKV, TGEG…QFTV, LGEG…VVPV, SPSG…KIRV, and GHGG…KAKV. Serine 1835 is subject to Phosphoserine. 10 positions are modified to phosphoserine: serine 1967, serine 2053, serine 2128, serine 2152, serine 2158, serine 2163, serine 2180, serine 2284, serine 2327, and serine 2329. Phosphothreonine is present on threonine 2336. Phosphoserine occurs at positions 2338, 2370, 2414, 2510, 2523, and 2526. The segment at 2517 to 2553 is hinge 2; sequence TGPRLVSNHSLHETSSVFVDSLTKVATVPQHATSGPG. A self-association site, tail region spans residues 2517–2647; that stretch reads TGPRLVSNHS…PGSPYRIMVP (131 aa). One copy of the Filamin 24 repeat lies at 2552–2646; the sequence is PGPADVSKVV…IPGSPYRIMV (95 aa). Residue lysine 2569 is modified to N6-acetyllysine; alternate. The residue at position 2569 (lysine 2569) is an N6-succinyllysine; alternate. At lysine 2575 the chain carries N6-acetyllysine. At threonine 2599 the chain carries Phosphothreonine. An N6-acetyllysine mark is found at lysine 2607 and lysine 2621.

Belongs to the filamin family. In terms of assembly, homodimer. Interacts with FCGR1A, FLNB, FURIN, HSPB7, KCND2, INPPL1, MYOT, MYOZ1, PDLIM2, ARHGAP24, PSEN1, PSEN2 and ECSCR. Also interacts with various other binding partners in addition to filamentous actin. Interacts (via N-terminus) with TAF1B. Interacts (via N-terminus) with MIS18BP1 (via N-terminus). Interacts with TMEM67 (via C-terminus) and MKS1. Interacts (via actin-binding domain) with MICALL2 (via calponin-homology (CH) domain). Interacts with RFLNA and RFLNB. Interacts (via filamin repeat 5) with SYK; docks SYK to the plasma membrane. Interacts (via filamin repeats 19 and 21) with DRD3; increased PKA-mediated phosphorylation at Ser-2152. Interacts (via filamin repeat 21) with MAS1, AGTR1 and ADRA1D; increases PKA-mediated phosphorylation of FLNA at Ser-2152. Interacts (via filamin repeats 4, 9, 12, 17, 19, 21, and 23) with GP1BA (high affinity), ITGB7, ITGB2 and FBLIM1. Interacts with CEACAM1 (via cytoplasmic domain); inhibits cell migration and cell scattering by interfering with the interaction between FLNA and RALA. Interacts with FOXC1. Interacts (via calponin-homology (CH) domain 1 and filamin repeat 24) with CRMP1; the interaction alters FLNA ternary structure and thus promotes FLNA dissociation from F-actin. Interacts with DPYSL3/CRMP3 and DPYSL4/CRMP4. Post-translationally, phosphorylation at Ser-2152 is negatively regulated by the autoinhibited conformation of filamin repeats 19-21. Ligand binding induces a conformational switch triggering phosphorylation at Ser-2152 by PKA. In terms of processing, polyubiquitination in the CH1 domain by a SCF-like complex containing ASB2 leads to proteasomal degradation. Prior dissociation from actin may be required to expose the target lysines. Ubiquitinated in endothelial cells by RNF213 downstream of the non-canonical Wnt signaling pathway, leading to its degradation by the proteasome. Widely expressed. Highly expressed in Purkinje cells.

Its subcellular location is the cytoplasm. It is found in the cell cortex. The protein resides in the cytoskeleton. It localises to the perikaryon. The protein localises to the cell projection. Its subcellular location is the growth cone. It is found in the podosome. Functionally, actin binding protein that promotes orthogonal branching of actin filaments and links actin filaments to membrane glycoproteins. Anchors various transmembrane proteins to the actin cytoskeleton and serves as a scaffold for a wide range of cytoplasmic signaling proteins. Interaction with FLNB may allow neuroblast migration from the ventricular zone into the cortical plate. Tethers cell surface-localized furin, modulates its rate of internalization and directs its intracellular trafficking. Involved in ciliogenesis. Plays a role in cell-cell contacts and adherens junctions during the development of blood vessels, heart and brain organs. Plays a role in platelets morphology through interaction with SYK that regulates ITAM- and ITAM-like-containing receptor signaling, resulting in by platelet cytoskeleton organization maintenance. During the axon guidance process, required for growth cone collapse induced by SEMA3A-mediated stimulation of neurons. This chain is Filamin-A (Flna), found in Mus musculus (Mouse).